The sequence spans 816 residues: Auxin response factor 12 (816 aa).

Over residues 1–10 (MSSSSAASIG) the composition is skewed to low complexity. Positions 1–24 (MSSSSAASIGPPQPPPPPAPPEEE) are disordered. Residues 11–20 (PPQPPPPPAP) show a composition bias toward pro residues. The TF-B3 DNA-binding region spans 135–237 (FCKTLTASDT…QLLLGIRRAS (103 aa)). A disordered region spans residues 526–565 (NDQKQKIQPDQSYQVPTSAVLPSPTSLPSHLREKFGFSDP). The region spanning 717–801 (RTFVKVYKSG…WYIKILSPED (85 aa)) is the PB1 domain.

Belongs to the ARF family. Homodimers and heterodimers.

The protein localises to the nucleus. Auxin response factors (ARFs) are transcriptional factors that bind specifically to the DNA sequence 5'-TGTCTC-3' found in the auxin-responsive promoter elements (AuxREs). The polypeptide is Auxin response factor 12 (ARF12) (Oryza sativa subsp. indica (Rice)).